Consider the following 101-residue polypeptide: Urease subunit beta (101 aa).

Belongs to the urease beta subunit family. Heterotrimer of UreA (gamma), UreB (beta) and UreC (alpha) subunits. Three heterotrimers associate to form the active enzyme.

The protein localises to the cytoplasm. The catalysed reaction is urea + 2 H2O + H(+) = hydrogencarbonate + 2 NH4(+). Its pathway is nitrogen metabolism; urea degradation; CO(2) and NH(3) from urea (urease route): step 1/1. The sequence is that of Urease subunit beta from Burkholderia ambifaria (strain MC40-6).